Reading from the N-terminus, the 520-residue chain is Amine oxidase [flavin-containing] B (520 aa).

Ser-2 is subject to N-acetylserine. Topologically, residues 2 to 489 are cytoplasmic; the sequence is SNKCDVIVVG…TFLERHLPSV (488 aa). Lys-52 bears the N6-acetyllysine mark. The residue at position 397 (Cys-397) is an S-8alpha-FAD cysteine. Residues 490–516 form a helical; Anchor for type IV membrane protein membrane-spanning segment; it reads PGLLKLLGLTTILSATALGFLAHKKGL. The Mitochondrial intermembrane portion of the chain corresponds to 517-520; sequence FVRF.

It belongs to the flavin monoamine oxidase family. In terms of assembly, monomer, homo- or heterodimer (containing two subunits of similar size). Each subunit contains a covalently bound flavin. Enzymatically active as monomer. The cofactor is FAD.

The protein localises to the mitochondrion outer membrane. The enzyme catalyses a secondary aliphatic amine + O2 + H2O = a primary amine + an aldehyde + H2O2. The catalysed reaction is (R)-adrenaline + O2 + H2O = (R)-3,4-dihydroxymandelaldehyde + methylamine + H2O2. It catalyses the reaction a primary methyl amine + O2 + H2O = an aldehyde + H2O2 + NH4(+). It carries out the reaction dopamine + O2 + H2O = 3,4-dihydroxyphenylacetaldehyde + H2O2 + NH4(+). The enzyme catalyses tyramine + O2 + H2O = (4-hydroxyphenyl)acetaldehyde + H2O2 + NH4(+). The catalysed reaction is (R)-noradrenaline + O2 + H2O = (R)-3,4-dihydroxymandelaldehyde + H2O2 + NH4(+). It catalyses the reaction benzylamine + O2 + H2O = benzaldehyde + H2O2 + NH4(+). It carries out the reaction 2-phenylethylamine + O2 + H2O = 2-phenylacetaldehyde + H2O2 + NH4(+). The enzyme catalyses N-acetylputrescine + O2 + H2O = 4-acetamidobutanal + H2O2 + NH4(+). Its function is as follows. Catalyzes the oxidative deamination of primary and some secondary amines such as neurotransmitters, and exogenous amines including the tertiary amine, neurotoxin 1-methyl-4-phenyl-1,2,3,6-tetrahydropyridine (MPTP), with concomitant reduction of oxygen to hydrogen peroxide and participates in the metabolism of neuroactive and vasoactive amines in the central nervous system and peripheral tissues. Preferentially degrades benzylamine and phenylethylamine. In Rattus norvegicus (Rat), this protein is Amine oxidase [flavin-containing] B.